The primary structure comprises 337 residues: Palmitoyltransferase ZDHHC15 (337 aa).

At 1–20 (MRRGWKMALSGGLRCCRRVL) the chain is on the cytoplasmic side. Residues 21–41 (SWVPVLVIVLVVLWSYYAYVF) traverse the membrane as a helical segment. Residues 42-56 (ELCLVTVLSPAEKVI) are Lumenal-facing. A helical transmembrane segment spans residues 57–77 (YLILYHAIFVFFAWTYWKSIF). The Cytoplasmic segment spans residues 78–172 (TLPQQPNQKF…NNCIGFSNYK (95 aa)). In terms of domain architecture, DHHC spans 129 to 179 (RFCDRCHLIKPDRCHHCSVCAMCVLKMDHHCPWVNNCIGFSNYKFFLQFLA). Zn(2+) is bound by residues Cys131, Cys134, His144, Cys145, Cys148, Cys151, and His158. Cys159 serves as the catalytic S-palmitoyl cysteine intermediate. Cys165 contributes to the Zn(2+) binding site. The helical transmembrane segment at 173-193 (FFLQFLAYSVLYCLYIATTVF) threads the bilayer. Residues 194–210 (SYFIKYWRGELPSVRSK) lie on the Lumenal side of the membrane. A helical transmembrane segment spans residues 211–234 (FHVLFLLFVACMFFVSLVILFGYH). Residues 235–337 (CWLVSRNKTT…SSSLAVESET (103 aa)) lie on the Cytoplasmic side of the membrane. Residues 293–337 (HSFPMRSMNESQNPLLANEEPWEDNEDDSRDYPEGSSSLAVESET) form a disordered region. The segment covering 312-321 (EPWEDNEDDS) has biased composition (acidic residues). Over residues 327-337 (GSSSLAVESET) the composition is skewed to polar residues.

It belongs to the DHHC palmitoyltransferase family. In terms of processing, autopalmitoylated (in vitro). As to expression, expressed mainly in brain.

It localises to the golgi apparatus membrane. It is found in the postsynaptic density. It catalyses the reaction L-cysteinyl-[protein] + hexadecanoyl-CoA = S-hexadecanoyl-L-cysteinyl-[protein] + CoA. It carries out the reaction L-cysteinyl-[protein] + tetradecanoyl-CoA = S-tetradecanoyl-L-cysteinyl-[protein] + CoA. The catalysed reaction is L-cysteinyl-[protein] + octadecanoyl-CoA = S-octadecanoyl-L-cysteinyl-[protein] + CoA. Inhibited by 2-bromopalmitate. Palmitoyltransferase that catalyzes the addition of palmitate onto various protein substrates. Has no stringent fatty acid selectivity and in addition to palmitate can also transfer onto target proteins myristate from tetradecanoyl-CoA and stearate from octadecanoyl-CoA. Palmitoylates IGF2R and SORT1, promoting their partitioning to an endosomal membrane subdomain where they can interact with the retromer cargo-selective complex. Thereby, regulates retrograde transport from endosomes to the Golgi apparatus of these lysosomal sorting receptors and plays a role in trafficking of lysosomal proteins. In the nervous system, catalyzes the palmitoylation of DLG4/PSD95 and regulates its synaptic clustering and function in synaptogenesis. Could be involved in the differentiation of dopaminergic neurons and the development of the diencephalon. Could also catalyze the palmitoylation of GAP43. Could also palmitoylate DNAJC5 and regulate its localization to the Golgi membrane. Could also palmitoylate FYN as shown in vitro. May palmitoylate CALHM3 subunit of gustatory voltage-gated ion channels and modulate channel gating and kinetics. In Mus musculus (Mouse), this protein is Palmitoyltransferase ZDHHC15.